Reading from the N-terminus, the 185-residue chain is MHRLTSDVDFFARSAVQVAADLIGADFTVSGVGGTIVETEAYLPDDAASHSFAGTTARNRAMFGPPAHAYIYLSYGLHWCLNFVCLPGSAVLIRAIEPRWGIDTMRARRGVREERLLCSGPGRVGQALAISRELDGLPLGEDPFRLTLPSTKPPLAAGIRVGITKAVEQPWRFGLAGSSFVSRKF.

Belongs to the DNA glycosylase MPG family.

In Rhizobium meliloti (strain 1021) (Ensifer meliloti), this protein is Putative 3-methyladenine DNA glycosylase.